A 523-amino-acid chain; its full sequence is 2-isopropylmalate synthase (523 aa).

Positions 5-267 (VIIFDTTLRD…HTAINHQEIW (263 aa)) constitute a Pyruvate carboxyltransferase domain. Mn(2+) contacts are provided by Asp-14, His-202, His-204, and Asn-238. The tract at residues 392 to 523 (RLDYFSVQSG…QHNENNKETV (132 aa)) is regulatory domain.

The protein belongs to the alpha-IPM synthase/homocitrate synthase family. LeuA type 1 subfamily. As to quaternary structure, homodimer. The cofactor is Mn(2+).

It is found in the cytoplasm. It carries out the reaction 3-methyl-2-oxobutanoate + acetyl-CoA + H2O = (2S)-2-isopropylmalate + CoA + H(+). It participates in amino-acid biosynthesis; L-leucine biosynthesis; L-leucine from 3-methyl-2-oxobutanoate: step 1/4. Catalyzes the condensation of the acetyl group of acetyl-CoA with 3-methyl-2-oxobutanoate (2-ketoisovalerate) to form 3-carboxy-3-hydroxy-4-methylpentanoate (2-isopropylmalate). This chain is 2-isopropylmalate synthase, found in Shigella flexneri.